Here is a 571-residue protein sequence, read N- to C-terminus: Penicillin-binding protein activator LpoA (571 aa).

The N-terminal stretch at 1–26 (MMTILLQHTHLKNRLMPFLLALFLAG) is a signal peptide. Residue C27 is the site of N-palmitoyl cysteine attachment. The S-diacylglycerol cysteine moiety is linked to residue C27.

It belongs to the LpoA family. Interacts with PBP1a.

The protein resides in the cell outer membrane. In terms of biological role, regulator of peptidoglycan synthesis that is essential for the function of penicillin-binding protein 1A (PBP1a). The sequence is that of Penicillin-binding protein activator LpoA from Pasteurella multocida (strain Pm70).